The sequence spans 2148 residues: Polyketide synthase 1 (2148 aa).

Residues 19-261 (FIFGDQSSCN…TPLAVHAPYH (243 aa)) form an N-terminal acylcarrier protein transacylase domain (SAT) region. The Ketosynthase family 3 (KS3) domain occupies 394–829 (ESKIAIIGMS…GGNTALLVED (436 aa)). Residues Cys-566, His-701, and His-745 each act as for beta-ketoacyl synthase activity in the active site. Positions 930–1236 (FVFSGQGSQY…MRNKDGWQVL (307 aa)) are malonyl-CoA:ACP transacylase (MAT) domain. Ser-1018 functions as the For acyl/malonyl transferase activity in the catalytic mechanism. The product template (PT) domain stretch occupies residues 1310-1624 (TASVHRMVHE…RKVLNTAMPP (315 aa)). The tract at residues 1314–1447 (HRMVHESVEK…SSLHFEQPKV (134 aa)) is N-terminal hotdog fold. The region spanning 1314 to 1619 (HRMVHESVEK…FQGIPRKVLN (306 aa)) is the PKS/mFAS DH domain. His-1346 acts as the Proton acceptor; for dehydratase activity in catalysis. Positions 1474–1619 (LNSRMSSGVI…FQGIPRKVLN (146 aa)) are C-terminal hotdog fold. Asp-1533 acts as the Proton donor; for dehydratase activity in catalysis. Residues 1619-1655 (NTAMPPPKSQNEAPVRSGPAKPAAKPPRSASSEHSGH) form a disordered region. A compositionally biased stretch (low complexity) spans 1634–1650 (RSGPAKPAAKPPRSASS). The Carrier 1 domain maps to 1678–1752 (RNPMLPVFKI…DLAAQLGLDT (75 aa)). Residue Ser-1712 is modified to O-(pantetheine 4'-phosphoryl)serine. Low complexity predominate over residues 1755 to 1790 (SDQSSGQSSSSGGLSPRSDSIGEITSSVTTPPSLSP). Residues 1755 to 1796 (SDQSSGQSSSSGGLSPRSDSIGEITSSVTTPPSLSPRGSVSG) form a disordered region. A Carrier 2 domain is found at 1793–1870 (SVSGSQCKDV…SFKHMFQQGH (78 aa)). Residue Ser-1830 is modified to O-(pantetheine 4'-phosphoryl)serine. Residues 1882–2146 (LKQYRATSTL…ERVAAFIRST (265 aa)) form a thioesterase (TE) domain region. The For thioesterase activity role is filled by Ser-1973.

Its pathway is pigment biosynthesis. In terms of biological role, polyketide synthase; part of the Pks1 gene cluster that mediates the biosynthesis of an anthraquinone derivative pigment that contributes to conidial pigmentation that provides protection from UV radiation, heat and cold stress. The polyketide synthase Pks1 produces 1-acetyl-2,4,6,8-tetrahydroxy-9,10-anthraquinone though condensation of acetyl-CoA with malonyl-CoA. The dehydratase EthD and the laccase Mlac1 further convert the anthraquinone derivative into the final conidial pigment. The sequence is that of Polyketide synthase 1 from Metarhizium robertsii (strain ARSEF 23 / ATCC MYA-3075) (Metarhizium anisopliae (strain ARSEF 23)).